The primary structure comprises 181 residues: Large ribosomal subunit protein uL5c (181 aa).

Belongs to the universal ribosomal protein uL5 family. In terms of assembly, part of the 50S ribosomal subunit; contacts the 5S rRNA.

Its subcellular location is the plastid. The protein localises to the cyanelle. Binds 5S rRNA, forms part of the central protuberance of the 50S subunit. The polypeptide is Large ribosomal subunit protein uL5c (rpl5) (Cyanophora paradoxa).